The following is a 140-amino-acid chain: Zinc finger SWIM domain-containing protein 7 (140 aa).

The SWIM-type zinc finger occupies 66-114; the sequence is YQVLGSSSKTYTCLASCHYCSCPAFAFSVLRKSDSILCKHLLAVYLSQV.

The protein belongs to the SWS1 family. In terms of assembly, interacts with RAD51D and XRCC3; involved in homologous recombination repair. Interacts with SWSAP1; they form a functional complex involved in homologous recombination repair and stabilize each other. Expressed in ovary and testis.

It localises to the nucleus. In terms of biological role, involved in early stages of the homologous recombination repair (HRR) pathway of double-stranded DNA breaks arising during DNA replication or induced by DNA-damaging agents. Required for meiotic progression, hence for fertility. This chain is Zinc finger SWIM domain-containing protein 7 (ZSWIM7), found in Homo sapiens (Human).